Here is a 588-residue protein sequence, read N- to C-terminus: Mitochondrial tRNA methylthiotransferase CDK5RAP1 (588 aa).

The N-terminal 30 residues, 1–30 (MHPLRCVLQVQRLSAPFTSMCWVLLRTCRA), are a transit peptide targeting the mitochondrion. Disordered stretches follow at residues 33–53 (SVSSTPCPSPEAKSSEAQKDF) and 70–91 (ASVPQEKPSSPEVEDPPPYLSG). The 121-residue stretch at 99-219 (RKVYLETYGC…LPRLLAVVES (121 aa)) folds into the MTTase N-terminal domain. [4Fe-4S] cluster-binding residues include C108, C144, C182, C257, C261, and C264. Positions 243–498 (SPSATSAFVS…TVFREEASKA (256 aa)) constitute a Radical SAM core domain. Residues 500–575 (KTSVGCSQLV…SQTLKGHILC (76 aa)) form the TRAM domain.

This sequence belongs to the methylthiotransferase family. MiaB subfamily. In terms of assembly, interacts with CDK5R1 (p35 form). CDK5RAP1, CDK5RAP2 and CDK5RAP3 show competitive binding to CDK5R1. Probably forms a complex with CDK5R1 and CDK5. Requires [4Fe-4S] cluster as cofactor. Expressed in brain, liver, skeletal muscle and heart.

The protein localises to the mitochondrion. It catalyses the reaction N(6)-dimethylallyladenosine(37) in tRNA + (sulfur carrier)-SH + AH2 + 2 S-adenosyl-L-methionine = 2-methylsulfanyl-N(6)-dimethylallyladenosine(37) in tRNA + (sulfur carrier)-H + 5'-deoxyadenosine + L-methionine + A + S-adenosyl-L-homocysteine + 2 H(+). In terms of biological role, methylthiotransferase that catalyzes the conversion of N6-(dimethylallyl)adenosine (i(6)A) to 2-methylthio-N6-(dimethylallyl)adenosine (ms(2)i(6)A) at position 37 (adjacent to the 3'-end of the anticodon) of four mitochondrial DNA-encoded tRNAs (Ser(UCN), Phe, Tyr and Trp). Essential for efficient and highly accurate protein translation by the ribosome. Specifically inhibits CDK5 activation by CDK5R1. Essential for efficient mitochondrial protein synthesis and respiratory chain. The chain is Mitochondrial tRNA methylthiotransferase CDK5RAP1 from Mus musculus (Mouse).